The sequence spans 513 residues: Coiled-coil domain-containing protein 102B (513 aa).

The segment at 1–217 is required for centriolar localization and for interaction with CEP250, CROCC, LRRC45 and NEK2; it reads MNLDSIHRLI…IDSLKLSEEM (217 aa). A phosphoserine mark is found at Ser-21, Ser-22, Ser-34, Ser-135, Ser-142, Ser-194, and Ser-210. Residues 72-142 are a coiled coil; sequence ELRLRELEEV…ELSTLKKKQS (71 aa). Coiled coils occupy residues 268-337 and 363-513; these read QKIL…ESKS and WDKR…LQNW. 3 positions are modified to phosphoserine: Ser-401, Ser-404, and Ser-406. The tract at residues 493–513 is disordered; that stretch reads LDEEKERNENLETELRHLQNW.

In terms of assembly, interacts (via N-terminus) with centriolar protein CEP250/CNAP1; the interaction results in recruitment of CCDC102B to the proximal ends of centrioles. Interacts (via N-terminus) with CROCC/rootletin and LRRC45. Interacts (via N-terminus) with serine/threonine-protein kinase NEK2; the interaction results in phosphorylation of CCDC102B. Phosphorylated directly or indirectly by NEK2 during mitosis which causes dissociation of CCDC102B from the centrosome and allows for centrosome separation.

The protein localises to the cytoplasm. It is found in the cytoskeleton. It localises to the microtubule organizing center. Its subcellular location is the centrosome. The protein resides in the centriole. During interphase, forms fibers at the proximal ends of centrioles to maintain centrosome cohesion. During mitosis, dissociates from the centrosome following phosphorylation to allow centrosome separation. Contributes to CROCC/rootletin filament formation. This Homo sapiens (Human) protein is Coiled-coil domain-containing protein 102B (CCDC102B).